The primary structure comprises 305 residues: Tyrosine recombinase XerC (305 aa).

Residues methionine 1 to valine 93 form the Core-binding (CB) domain. The Tyr recombinase domain occupies arginine 114–aspartate 294. Residues arginine 155, lysine 179, histidine 246, arginine 249, and histidine 272 contribute to the active site. The active-site O-(3'-phospho-DNA)-tyrosine intermediate is tyrosine 281.

This sequence belongs to the 'phage' integrase family. XerC subfamily. As to quaternary structure, forms a cyclic heterotetrameric complex composed of two molecules of XerC and two molecules of XerD.

Its subcellular location is the cytoplasm. Functionally, site-specific tyrosine recombinase, which acts by catalyzing the cutting and rejoining of the recombining DNA molecules. The XerC-XerD complex is essential to convert dimers of the bacterial chromosome into monomers to permit their segregation at cell division. It also contributes to the segregational stability of plasmids. This chain is Tyrosine recombinase XerC, found in Neisseria meningitidis serogroup C (strain 053442).